The sequence spans 523 residues: REST corepressor 2 (523 aa).

The interval 1 to 43 (MPSVMEKPSAGSGILSRSRAKTAPNGGQPHSEDDSSEEEHSHD) is disordered. Positions 30–43 (HSEDDSSEEEHSHD) are enriched in basic and acidic residues. A phosphoserine mark is found at serine 31, serine 35, serine 36, and serine 63. The 86-residue stretch at 44–129 (SMIRVGTNYQ…KSLADLANFT (86 aa)) folds into the ELM2 domain. Lysine 88 participates in a covalent cross-link: Glycyl lysine isopeptide (Lys-Gly) (interchain with G-Cter in SUMO2). Residues 130-181 (PFPDEWTVEDKVLFEQAFGFHGKCFQRIQQMLPDKVIPSLVKYYYSWKKTRS) form the SANT 1 domain. The tract at residues 185-244 (VMDRQARRLGGRKDKEDSDELEEGRGAVSEGEPDTGDPKREPLPSRPLNARPGPGKKEVQ) is disordered. At serine 202 the chain carries Phosphoserine. Residues 283–314 (TLRGLDSQLISLKRQVQSMKQTNSSLRQALEG) are a coiled coil. The SANT 2 domain maps to 327-378 (KFNSRWTTDEQLLAVQAIRRYGKDFGAIAEVIGNKTLTQVKTFFVSYRRRFN). Residues 387 to 523 (EAEQDGAPAA…APLEPPAPSL (137 aa)) are disordered. Positions 432-459 (SVPPAPPPPPPPTSLSQPPPLLRPPLPT) are enriched in pro residues. Positions 460-482 (APTLLRQPPPLQQGRFLQPRLAP) are enriched in low complexity. At arginine 479 the chain carries Asymmetric dimethylarginine. The segment covering 504–523 (GPQPPPTLVGAPLEPPAPSL) has biased composition (pro residues).

The protein belongs to the CoREST family. As to expression, predominantly, but not exclusively, expressed in neural tissue. Strongly expressed in neural domains of the developing brain of the developing mouse CNS.

It is found in the nucleus. In terms of biological role, may act as a component of a corepressor complex that represses transcription. The chain is REST corepressor 2 (Rcor2) from Mus musculus (Mouse).